We begin with the raw amino-acid sequence, 415 residues long: Neuromedin-U receptor 2 (415 aa).

The Extracellular segment spans residues 1–49; the sequence is MSGMEKLQNASWIYQQKLEDPFQKHLNSTEEYLAFLCGPRRSHFFLPVS. N-linked (GlcNAc...) asparagine glycosylation is found at Asn-9 and Asn-27. Residues 50–70 traverse the membrane as a helical segment; it reads VVYVPIFVVGVIGNVLVCLVI. The Cytoplasmic portion of the chain corresponds to 71–82; that stretch reads LQHQAMKTPTNY. Residues 83 to 103 traverse the membrane as a helical segment; it reads YLFSLAVSDLLVLLLGMPLEV. Residues 104–123 lie on the Extracellular side of the membrane; that stretch reads YEMWRNYPFLFGPVGCYFKT. A disulfide bond links Cys-119 and Cys-204. The chain crosses the membrane as a helical span at residues 124–146; that stretch reads ALFETVCFASILSITTVSVERYV. The Cytoplasmic segment spans residues 147 to 165; that stretch reads AILHPFRAKLQSTRRRALR. A helical membrane pass occupies residues 166–186; the sequence is ILGIVWGFSVLFSLPNTSIHG. The Extracellular portion of the chain corresponds to 187 to 214; the sequence is IKFHYFPNGSLVPGSATCTVIKPMWIYN. Asn-194 carries N-linked (GlcNAc...) asparagine glycosylation. The chain crosses the membrane as a helical span at residues 215–235; the sequence is FIIQVTSFLFYLLPMTVISVL. Topologically, residues 236 to 265 are cytoplasmic; sequence YYLMALRLKKDKSLEADEGNANIQRPCRKS. A helical transmembrane segment spans residues 266 to 286; the sequence is VNKMLFVLVLVFAICWAPFHI. Residues 287 to 301 lie on the Extracellular side of the membrane; that stretch reads DRLFFSFVEEWSESL. Residues 302 to 322 form a helical membrane-spanning segment; sequence AAVFNLVHVVSGVFFYLSSAV. Residues 323–415 lie on the Cytoplasmic side of the membrane; sequence NPIIYNLLSR…NYQSFHFNKT (93 aa).

This sequence belongs to the G-protein coupled receptor 1 family. As to expression, predominantly expressed in the CNS, particularly in the medulla oblongata, pontine reticular formation, spinal cord, and thalamus. High level in testis whereas lower levels are present in a variety of peripheral tissues including the gastrointestinal tract, genitourinary tract, liver, pancreas, adrenal gland, thyroid gland, lung, trachea, spleen and thymus.

The protein resides in the cell membrane. Its function is as follows. Receptor for the neuromedin-U and neuromedin-S neuropeptides. The chain is Neuromedin-U receptor 2 (NMUR2) from Homo sapiens (Human).